Consider the following 606-residue polypeptide: Aspartate--tRNA(Asp/Asn) ligase (606 aa).

Glutamate 172 contributes to the L-aspartate binding site. Residues 196–199 are aspartate; the sequence is QLFK. Arginine 218 contributes to the L-aspartate binding site. ATP-binding positions include 218–220 and glutamine 227; that span reads RDE. Residue histidine 448 participates in L-aspartate binding. Glutamate 482 serves as a coordination point for ATP. Arginine 489 provides a ligand contact to L-aspartate. 534-537 contacts ATP; that stretch reads GWDR.

This sequence belongs to the class-II aminoacyl-tRNA synthetase family. Type 1 subfamily. Homodimer.

It is found in the cytoplasm. The catalysed reaction is tRNA(Asx) + L-aspartate + ATP = L-aspartyl-tRNA(Asx) + AMP + diphosphate. Its function is as follows. Aspartyl-tRNA synthetase with relaxed tRNA specificity since it is able to aspartylate not only its cognate tRNA(Asp) but also tRNA(Asn). Reaction proceeds in two steps: L-aspartate is first activated by ATP to form Asp-AMP and then transferred to the acceptor end of tRNA(Asp/Asn). In Saccharopolyspora erythraea (strain ATCC 11635 / DSM 40517 / JCM 4748 / NBRC 13426 / NCIMB 8594 / NRRL 2338), this protein is Aspartate--tRNA(Asp/Asn) ligase.